Here is a 294-residue protein sequence, read N- to C-terminus: Deubiquitinase OTUD6B (294 aa).

Residues 85–120 (VTSLDLGSEEPVQQPRVSKAQKRREKKAAQEKERDD) are disordered. Over residues 111–120 (KAAQEKERDD) the composition is skewed to basic and acidic residues. Residues 150-287 (LQIRQIPSDG…GEHYNSVEQL (138 aa)) enclose the OTU domain. The interval 155–161 (IPSDGHC) is cys-loop. Residue Asp158 is part of the active site. The Nucleophile role is filled by Cys161. The segment at 222–232 (IVNTPAWGGQL) is variable-loop. The segment at 270-280 (YMRHAYGLGEH) is his-loop. The active site involves His280.

It catalyses the reaction Thiol-dependent hydrolysis of ester, thioester, amide, peptide and isopeptide bonds formed by the C-terminal Gly of ubiquitin (a 76-residue protein attached to proteins as an intracellular targeting signal).. In terms of biological role, deubiquitinating enzyme that may play a role in the ubiquitin-dependent regulation of different cellular processes. In Xenopus laevis (African clawed frog), this protein is Deubiquitinase OTUD6B (otud6b).